The primary structure comprises 428 residues: Nucleoside diphosphate phosphatase ENTPD5 (428 aa).

The N-terminal stretch at 1–24 is a signal peptide; the sequence is MATSWGTVFFMLVVSCVCSAVSHR. Catalysis depends on E172, which acts as the Proton acceptor. N232 is a glycosylation site (N-linked (GlcNAc...) asparagine). 2 cysteine pairs are disulfide-bonded: C272-C303 and C363-C377. N368 carries an N-linked (GlcNAc...) asparagine glycan.

The protein belongs to the GDA1/CD39 NTPase family. In terms of assembly, monomer; active form. Homodimer; disulfide-linked. Homodimers are enzymatically inactive. Ca(2+) serves as cofactor. Requires Mg(2+) as cofactor. Post-translationally, N-glycosylated; high-mannose type. Glycosylation is not essential for enzymatic activity. Expressed in adult liver, kidney, prostate, testis and colon. Much weaker expression in other tissues.

It localises to the endoplasmic reticulum. The protein resides in the secreted. The enzyme catalyses a ribonucleoside 5'-diphosphate + H2O = a ribonucleoside 5'-phosphate + phosphate + H(+). It carries out the reaction GDP + H2O = GMP + phosphate + H(+). The catalysed reaction is UDP + H2O = UMP + phosphate + H(+). It catalyses the reaction IDP + H2O = IMP + phosphate + H(+). The enzyme catalyses CDP + H2O = CMP + phosphate + H(+). It carries out the reaction ADP + H2O = AMP + phosphate + H(+). It functions in the pathway protein modification; protein glycosylation. Hydrolyzes nucleoside diphosphates with a preference for GDP, IDP and UDP compared to ADP and CDP. In the lumen of the endoplasmic reticulum, hydrolyzes UDP that acts as an end-product feedback inhibitor of the UDP-Glc:glycoprotein glucosyltransferases. UMP can be transported back by an UDP-sugar antiporter to the cytosol where it is consumed to regenerate UDP-glucose. Therefore, it positively regulates protein reglucosylation by clearing UDP from the ER lumen and by promoting the regeneration of UDP-glucose. Protein reglucosylation is essential to proper glycoprotein folding and quality control in the ER. The sequence is that of Nucleoside diphosphate phosphatase ENTPD5 from Homo sapiens (Human).